A 137-amino-acid polypeptide reads, in one-letter code: uncharacterized protein (137 aa).

4 consecutive transmembrane segments (helical) span residues 14-34 (AVVVAILLYIFIILVVDGSIS), 48-68 (YHIIEFYDFIHIIGFLLSLSI), 84-104 (FFTIFFGITFILGITLFLGLT), and 109-129 (HIPSMRGYTTLMLFFFLLNLF).

The protein resides in the cell membrane. This is an uncharacterized protein from Methanocaldococcus jannaschii (strain ATCC 43067 / DSM 2661 / JAL-1 / JCM 10045 / NBRC 100440) (Methanococcus jannaschii).